Here is a 229-residue protein sequence, read N- to C-terminus: Small ribosomal subunit protein uS2c (229 aa).

It belongs to the universal ribosomal protein uS2 family.

Its subcellular location is the plastid. The protein localises to the chloroplast. The chain is Small ribosomal subunit protein uS2c (rps2) from Emiliania huxleyi (Coccolithophore).